We begin with the raw amino-acid sequence, 596 residues long: Probable protein phosphatase 2C 26 (596 aa).

Residues 122–154 (SGPLDPAVPFSGPLPAKPPKPASSSSRGFSRRF) form a disordered region. A PPM-type phosphatase domain is found at 177–584 (LRRDDGVQWA…DDVTVMVISL (408 aa)). The Mn(2+) site is built by Asp-212, Gly-213, Asp-512, and Asp-575.

This sequence belongs to the PP2C family. Mg(2+) is required as a cofactor. The cofactor is Mn(2+).

The enzyme catalyses O-phospho-L-seryl-[protein] + H2O = L-seryl-[protein] + phosphate. It catalyses the reaction O-phospho-L-threonyl-[protein] + H2O = L-threonyl-[protein] + phosphate. In Oryza sativa subsp. japonica (Rice), this protein is Probable protein phosphatase 2C 26.